Reading from the N-terminus, the 119-residue chain is Large ribosomal subunit protein bL20 (119 aa).

This sequence belongs to the bacterial ribosomal protein bL20 family.

Its function is as follows. Binds directly to 23S ribosomal RNA and is necessary for the in vitro assembly process of the 50S ribosomal subunit. It is not involved in the protein synthesizing functions of that subunit. In Nitrobacter hamburgensis (strain DSM 10229 / NCIMB 13809 / X14), this protein is Large ribosomal subunit protein bL20.